The primary structure comprises 161 residues: Transcription antitermination protein NusB (161 aa).

It belongs to the NusB family.

Involved in transcription antitermination. Required for transcription of ribosomal RNA (rRNA) genes. Binds specifically to the boxA antiterminator sequence of the ribosomal RNA (rrn) operons. This is Transcription antitermination protein NusB from Syntrophus aciditrophicus (strain SB).